We begin with the raw amino-acid sequence, 329 residues long: tRNA N6-adenosine threonylcarbamoyltransferase (329 aa).

The Fe cation site is built by H108, H112, and Y129. Substrate is bound by residues 129–133, D161, E182, and S261; that span reads YVSGG. Residue D289 participates in Fe cation binding.

Belongs to the KAE1 / TsaD family. Fe(2+) serves as cofactor.

The protein resides in the cytoplasm. It catalyses the reaction L-threonylcarbamoyladenylate + adenosine(37) in tRNA = N(6)-L-threonylcarbamoyladenosine(37) in tRNA + AMP + H(+). Functionally, required for the formation of a threonylcarbamoyl group on adenosine at position 37 (t(6)A37) in tRNAs that read codons beginning with adenine. Is probably involved in the transfer of the threonylcarbamoyl moiety of threonylcarbamoyl-AMP (TC-AMP) to the N6 group of A37. The protein is tRNA N6-adenosine threonylcarbamoyltransferase of Ignicoccus hospitalis (strain KIN4/I / DSM 18386 / JCM 14125).